We begin with the raw amino-acid sequence, 264 residues long: Thiazole synthase (264 aa).

The Schiff-base intermediate with DXP role is filled by K98. Residues G159, A185–G186, and A207–T208 each bind 1-deoxy-D-xylulose 5-phosphate.

This sequence belongs to the ThiG family. In terms of assembly, homotetramer. Forms heterodimers with either ThiH or ThiS.

The protein resides in the cytoplasm. It catalyses the reaction [ThiS sulfur-carrier protein]-C-terminal-Gly-aminoethanethioate + 2-iminoacetate + 1-deoxy-D-xylulose 5-phosphate = [ThiS sulfur-carrier protein]-C-terminal Gly-Gly + 2-[(2R,5Z)-2-carboxy-4-methylthiazol-5(2H)-ylidene]ethyl phosphate + 2 H2O + H(+). It participates in cofactor biosynthesis; thiamine diphosphate biosynthesis. Catalyzes the rearrangement of 1-deoxy-D-xylulose 5-phosphate (DXP) to produce the thiazole phosphate moiety of thiamine. Sulfur is provided by the thiocarboxylate moiety of the carrier protein ThiS. In vitro, sulfur can be provided by H(2)S. This is Thiazole synthase from Mycobacterium marinum (strain ATCC BAA-535 / M).